The primary structure comprises 123 residues: Holo-[acyl-carrier-protein] synthase (123 aa).

Mg(2+) contacts are provided by Asp8 and Glu56.

It belongs to the P-Pant transferase superfamily. AcpS family. Mg(2+) serves as cofactor.

The protein resides in the cytoplasm. The catalysed reaction is apo-[ACP] + CoA = holo-[ACP] + adenosine 3',5'-bisphosphate + H(+). Its function is as follows. Transfers the 4'-phosphopantetheine moiety from coenzyme A to a Ser of acyl-carrier-protein. The protein is Holo-[acyl-carrier-protein] synthase of Treponema denticola (strain ATCC 35405 / DSM 14222 / CIP 103919 / JCM 8153 / KCTC 15104).